Consider the following 764-residue polypeptide: 5-methyltetrahydropteroyltriglutamate--homocysteine methyltransferase (764 aa).

5-methyltetrahydropteroyltri-L-glutamate-binding positions include 16 to 19 (RELK) and Lys-115. L-homocysteine-binding positions include 435-437 (IGS) and Glu-488. L-methionine is bound by residues 435 to 437 (IGS) and Glu-488. 5-methyltetrahydropteroyltri-L-glutamate is bound by residues 519-520 (RC) and Trp-565. Asp-603 lines the L-homocysteine pocket. Asp-603 contributes to the L-methionine binding site. Glu-609 provides a ligand contact to 5-methyltetrahydropteroyltri-L-glutamate. Residues His-645, Cys-647, and Glu-669 each contribute to the Zn(2+) site. His-698 acts as the Proton donor in catalysis. A Zn(2+)-binding site is contributed by Cys-730.

Belongs to the vitamin-B12 independent methionine synthase family. Zn(2+) serves as cofactor.

The catalysed reaction is 5-methyltetrahydropteroyltri-L-glutamate + L-homocysteine = tetrahydropteroyltri-L-glutamate + L-methionine. The protein operates within amino-acid biosynthesis; L-methionine biosynthesis via de novo pathway; L-methionine from L-homocysteine (MetE route): step 1/1. Its function is as follows. Catalyzes the transfer of a methyl group from 5-methyltetrahydrofolate to homocysteine resulting in methionine formation. This is 5-methyltetrahydropteroyltriglutamate--homocysteine methyltransferase from Burkholderia mallei (strain NCTC 10247).